Here is a 1490-residue protein sequence, read N- to C-terminus: Vacuolar protein sorting/targeting protein 10 (1490 aa).

Positions 1–21 (MKHLKGLLLPALLALASSAAA) are cleaved as a signal peptide. Residues 22–1354 (KDPLVETTPF…DFQKNHGVGG (1333 aa)) are Lumenal-facing. The stretch at 97-107 (WITFDQGENWD) is one BNR 1 repeat. Asn-285 and Asn-309 each carry an N-linked (GlcNAc...) asparagine glycan. BNR repeat units lie at residues 364 to 374 (ISFDDGRSFEK), 426 to 436 (YVSDDAGLTWE), and 719 to 730 (YITHDHGKKWKK). N-linked (GlcNAc...) asparagine glycosylation is present at Asn-970. A disordered region spans residues 1016-1048 (SKKKKQSRITHNDGADWEPLQAPEKDSDDKPYD). Residues 1038–1048 (PEKDSDDKPYD) are compositionally biased toward basic and acidic residues. BNR repeat units lie at residues 1102-1112 (FMTTDAGITWK) and 1143-1153 (YYSTDSGAKWD). N-linked (GlcNAc...) asparagine glycosylation occurs at Asn-1265. Residues 1355-1375 (FTLFLAIVLPFAAAGGVGYWV) traverse the membrane as a helical segment. The Cytoplasmic portion of the chain corresponds to 1376–1405 (WRNWDGKFGRIRLGEPGGGSAFDSDAPWVR). The chain crosses the membrane as a helical span at residues 1406–1426 (WPIAAVSGLVAVIAALPLVVG). Residues 1427-1490 (SVWRWVAGRM…LGDEESDEDV (64 aa)) lie on the Lumenal side of the membrane. Residues 1465-1490 (RGRGEYSVVDPDEGELLGDEESDEDV) are disordered. Positions 1474 to 1490 (DPDEGELLGDEESDEDV) are enriched in acidic residues.

It belongs to the VPS10-related sortilin family.

Its subcellular location is the golgi apparatus. The protein localises to the trans-Golgi network membrane. It is found in the prevacuolar compartment membrane. In terms of biological role, functions as a sorting receptor in the Golgi compartment required for the intracellular sorting and delivery of soluble vacuolar proteins, like carboxypeptidase Y (CPY) and proteinase A. Executes multiple rounds of sorting by cycling between the late Golgi and a prevacuolar endosome-like compartment. The sequence is that of Vacuolar protein sorting/targeting protein 10 (vps10) from Pyrenophora teres f. teres (strain 0-1) (Barley net blotch fungus).